A 511-amino-acid polypeptide reads, in one-letter code: Pancreatic alpha-amylase (511 aa).

An N-terminal signal peptide occupies residues 1–15; that stretch reads MKFFLLLFTIGFCWA. Glutamine 16 bears the Pyrrolidone carboxylic acid mark. Disulfide bonds link cysteine 43–cysteine 101, cysteine 85–cysteine 130, and cysteine 156–cysteine 175. Residues asparagine 115, arginine 173, and aspartate 182 each contribute to the Ca(2+) site. A chloride-binding site is contributed by arginine 210. Catalysis depends on aspartate 212, which acts as the Nucleophile. Residue histidine 216 participates in Ca(2+) binding. Catalysis depends on glutamate 248, which acts as the Proton donor. 2 residues coordinate chloride: asparagine 313 and arginine 352. Disulfide bonds link cysteine 393-cysteine 399 and cysteine 465-cysteine 477. Asparagine 476 carries N-linked (GlcNAc...) asparagine glycosylation.

This sequence belongs to the glycosyl hydrolase 13 family. Monomer. Binds to the sea anemone inhibitor helianthamide. It depends on Ca(2+) as a cofactor. Chloride serves as cofactor. In terms of tissue distribution, detected in pancreas (at protein level).

It is found in the secreted. It localises to the extracellular space. It catalyses the reaction Endohydrolysis of (1-&gt;4)-alpha-D-glucosidic linkages in polysaccharides containing three or more (1-&gt;4)-alpha-linked D-glucose units.. This Homo sapiens (Human) protein is Pancreatic alpha-amylase (AMY2A).